Consider the following 71-residue polypeptide: ATP synthase F(0) complex subunit e, mitochondrial (71 aa).

K34 carries the post-translational modification N6-acetyllysine. Phosphoserine is present on S68.

Belongs to the ATPase e subunit family. Component of the ATP synthase complex composed at least of ATP5F1A/subunit alpha, ATP5F1B/subunit beta, ATP5MC1/subunit c (homooctomer), MT-ATP6/subunit a, MT-ATP8/subunit 8, ATP5ME/subunit e, ATP5MF/subunit f, ATP5MG/subunit g, ATP5MK/subunit k, ATP5MJ/subunit j, ATP5F1C/subunit gamma, ATP5F1D/subunit delta, ATP5F1E/subunit epsilon, ATP5PF/subunit F6, ATP5PB/subunit b, ATP5PD/subunit d, ATP5PO/subunit OSCP. ATP synthase complex consists of a soluble F(1) head domain (subunits alpha(3) and beta(3)) - the catalytic core - and a membrane F(0) domain - the membrane proton channel (subunits c, a, 8, e, f, g, k and j). These two domains are linked by a central stalk (subunits gamma, delta, and epsilon) rotating inside the F1 region and a stationary peripheral stalk (subunits F6, b, d, and OSCP).

It is found in the mitochondrion. The protein resides in the mitochondrion inner membrane. Functionally, subunit e, of the mitochondrial membrane ATP synthase complex (F(1)F(0) ATP synthase or Complex V) that produces ATP from ADP in the presence of a proton gradient across the membrane which is generated by electron transport complexes of the respiratory chain. ATP synthase complex consist of a soluble F(1) head domain - the catalytic core - and a membrane F(1) domain - the membrane proton channel. These two domains are linked by a central stalk rotating inside the F(1) region and a stationary peripheral stalk. During catalysis, ATP synthesis in the catalytic domain of F(1) is coupled via a rotary mechanism of the central stalk subunits to proton translocation. In vivo, can only synthesize ATP although its ATP hydrolase activity can be activated artificially in vitro. Part of the complex F(0) domain. This chain is ATP synthase F(0) complex subunit e, mitochondrial, found in Sus scrofa (Pig).